Here is a 516-residue protein sequence, read N- to C-terminus: Cytochrome P450 93G1 (516 aa).

A helical membrane pass occupies residues Leu11–Val31. Cys454 is a binding site for heme.

It belongs to the cytochrome P450 family. The cofactor is heme.

The protein resides in the membrane. The catalysed reaction is a flavanone + reduced [NADPH--hemoprotein reductase] + O2 = a flavone + oxidized [NADPH--hemoprotein reductase] + 2 H2O + H(+). The protein operates within secondary metabolite biosynthesis; flavonoid biosynthesis. Its function is as follows. Functions as a flavone synthase II (FNSII) that catalyzes the direct conversion of flavanones to flavones. In vitro, can convert naringenin and eriodictyol to apigenin and luteolin, respectively. Acts as a key branch point enzyme that channels flavanones to the biosynthesis of soluble tricin O-linked conjugates. This chain is Cytochrome P450 93G1, found in Oryza sativa subsp. japonica (Rice).